We begin with the raw amino-acid sequence, 388 residues long: F-box/kelch-repeat protein At3g17530 (388 aa).

An F-box domain is found at 1-50; the sequence is MMISDLPHDLESEILSRVPAKSLAKWKTTCKRWYALFRDPSFVKKNFDKA. Kelch repeat units follow at residues 163 to 208 and 336 to 383; these read CCYY…VSLK and RIYI…AEEN.

The polypeptide is F-box/kelch-repeat protein At3g17530 (Arabidopsis thaliana (Mouse-ear cress)).